The following is a 369-amino-acid chain: Putative 2-aminoethylphosphonate import ATP-binding protein PhnT (369 aa).

In terms of domain architecture, ABC transporter spans 19–250; it reads IVLDSLRVAY…PPNRFAAEFL (232 aa). 51-58 provides a ligand contact to ATP; that stretch reads GPSGSGKT.

It belongs to the ABC transporter superfamily. 2-aminoethylphosphonate importer (TC 3.A.1.11.5) family.

It is found in the cell inner membrane. Its function is as follows. Probably part of the PhnSTUV complex (TC 3.A.1.11.5) involved in 2-aminoethylphosphonate import. Probably responsible for energy coupling to the transport system. The polypeptide is Putative 2-aminoethylphosphonate import ATP-binding protein PhnT (phnT) (Salmonella typhi).